The following is a 313-amino-acid chain: Elongation factor Ts (313 aa).

The involved in Mg(2+) ion dislocation from EF-Tu stretch occupies residues 82–85 (TDFV).

The protein belongs to the EF-Ts family.

It localises to the cytoplasm. In terms of biological role, associates with the EF-Tu.GDP complex and induces the exchange of GDP to GTP. It remains bound to the aminoacyl-tRNA.EF-Tu.GTP complex up to the GTP hydrolysis stage on the ribosome. In Nostoc sp. (strain PCC 7120 / SAG 25.82 / UTEX 2576), this protein is Elongation factor Ts.